The primary structure comprises 386 residues: Formate-dependent phosphoribosylglycinamide formyltransferase (386 aa).

N(1)-(5-phospho-beta-D-ribosyl)glycinamide-binding positions include 10–11 (EL) and Glu-70. ATP-binding positions include Arg-102, Lys-143, 148-153 (SSGKGQ), 183-186 (EAFV), and Glu-191. The region spanning 107-298 (DLAAKELGLK…EFELHLRAIL (192 aa)) is the ATP-grasp domain. The Mg(2+) site is built by Glu-256 and Glu-268. N(1)-(5-phospho-beta-D-ribosyl)glycinamide is bound by residues Asp-275, Lys-346, and 353–354 (RR).

It belongs to the PurK/PurT family. Homodimer.

It carries out the reaction N(1)-(5-phospho-beta-D-ribosyl)glycinamide + formate + ATP = N(2)-formyl-N(1)-(5-phospho-beta-D-ribosyl)glycinamide + ADP + phosphate + H(+). Its pathway is purine metabolism; IMP biosynthesis via de novo pathway; N(2)-formyl-N(1)-(5-phospho-D-ribosyl)glycinamide from N(1)-(5-phospho-D-ribosyl)glycinamide (formate route): step 1/1. Involved in the de novo purine biosynthesis. Catalyzes the transfer of formate to 5-phospho-ribosyl-glycinamide (GAR), producing 5-phospho-ribosyl-N-formylglycinamide (FGAR). Formate is provided by PurU via hydrolysis of 10-formyl-tetrahydrofolate. In Flavobacterium psychrophilum (strain ATCC 49511 / DSM 21280 / CIP 103535 / JIP02/86), this protein is Formate-dependent phosphoribosylglycinamide formyltransferase.